Reading from the N-terminus, the 452-residue chain is Trigger factor (452 aa).

Positions 170-255 (GDRVTIDFTG…VKSVAAPGPL (86 aa)) constitute a PPIase FKBP-type domain.

The protein belongs to the FKBP-type PPIase family. Tig subfamily.

Its subcellular location is the cytoplasm. The enzyme catalyses [protein]-peptidylproline (omega=180) = [protein]-peptidylproline (omega=0). In terms of biological role, involved in protein export. Acts as a chaperone by maintaining the newly synthesized protein in an open conformation. Functions as a peptidyl-prolyl cis-trans isomerase. The sequence is that of Trigger factor from Xanthobacter autotrophicus (strain ATCC BAA-1158 / Py2).